A 789-amino-acid polypeptide reads, in one-letter code: Mitochondrial inner membrane m-AAA protease component AFG3L1 (789 aa).

Residues 1-70 (MLLRLVGAAG…KLTSFSPRLY (70 aa)) constitute a mitochondrion transit peptide. The disordered stretch occupies residues 81 to 121 (FKNKKNRKSASPGNSVPPKKEPKNAGPGGDGGNRGGKGDDF). A compositionally biased stretch (gly residues) spans 106 to 115 (GPGGDGGNRG). 2 helical membrane passes run 139 to 158 (FRSL…YFYF) and 246 to 264 (FLRS…LYAM). ATP-binding residues include V302, A303, T344, G345, K346, T347, L348, and H482. Position 566 (H566) interacts with Zn(2+). The active site involves E567. Zn(2+)-binding residues include H570 and D641. The segment at 749–789 (EEFVEGTGSLEEDTSLPEGLKDWNKGREEGGTERGLQESPV) is disordered. The span at 767–789 (GLKDWNKGREEGGTERGLQESPV) shows a compositional bias: basic and acidic residues.

In the N-terminal section; belongs to the AAA ATPase family. It in the C-terminal section; belongs to the peptidase M41 family. In terms of assembly, homooligomer. Forms heterohexamers with Spg7 and Afg3l1. The m-AAA protease is either composed of homohexamers of Afg3l2 or heterohexamers of Afg3l1, Afg3l2 and/or Spg7. It depends on Zn(2+) as a cofactor.

It is found in the mitochondrion inner membrane. It carries out the reaction ATP + H2O = ADP + phosphate + H(+). Functionally, catalytic component of the m-AAA protease, a protease that plays a key role in proteostasis of inner mitochondrial membrane proteins, and which is essential for axonal and neuron development. Afg3l1 possesses both ATPase and protease activities: the ATPase activity is required to unfold substrates, threading them into the internal proteolytic cavity for hydrolysis into small peptide fragments. The m-AAA protease exerts a dual role in the mitochondrial inner membrane: it mediates the processing of specific regulatory proteins and ensures protein quality control by degrading misfolded polypeptides. Required for SPG7 maturation into its active mature form after SPG7 cleavage by mitochondrial-processing peptidase (MPP). The protein is Mitochondrial inner membrane m-AAA protease component AFG3L1 of Mus musculus (Mouse).